A 243-amino-acid polypeptide reads, in one-letter code: Ribosomal RNA small subunit methyltransferase J (243 aa).

S-adenosyl-L-methionine is bound by residues 112–113 and Asp-164; that span reads ER.

It belongs to the methyltransferase superfamily. RsmJ family.

It localises to the cytoplasm. It carries out the reaction guanosine(1516) in 16S rRNA + S-adenosyl-L-methionine = N(2)-methylguanosine(1516) in 16S rRNA + S-adenosyl-L-homocysteine + H(+). Its function is as follows. Specifically methylates the guanosine in position 1516 of 16S rRNA. The chain is Ribosomal RNA small subunit methyltransferase J from Legionella pneumophila (strain Corby).